Reading from the N-terminus, the 480-residue chain is Ribulose bisphosphate carboxylase large chain (480 aa).

The propeptide occupies methionine 1–serine 2. The residue at position 3 (proline 3) is an N-acetylproline. Lysine 14 carries the post-translational modification N6,N6,N6-trimethyllysine. Substrate-binding residues include asparagine 123 and threonine 173. Catalysis depends on lysine 175, which acts as the Proton acceptor. Lysine 177 is a binding site for substrate. Residues lysine 201, aspartate 203, and glutamate 204 each contribute to the Mg(2+) site. The residue at position 201 (lysine 201) is an N6-carboxylysine. Histidine 294 serves as the catalytic Proton acceptor. Substrate is bound by residues arginine 295, histidine 327, and serine 379.

This sequence belongs to the RuBisCO large chain family. Type I subfamily. Heterohexadecamer of 8 large chains and 8 small chains; disulfide-linked. The disulfide link is formed within the large subunit homodimers. Mg(2+) serves as cofactor. Post-translationally, the disulfide bond which can form in the large chain dimeric partners within the hexadecamer appears to be associated with oxidative stress and protein turnover.

It localises to the plastid. The protein localises to the chloroplast. It carries out the reaction 2 (2R)-3-phosphoglycerate + 2 H(+) = D-ribulose 1,5-bisphosphate + CO2 + H2O. It catalyses the reaction D-ribulose 1,5-bisphosphate + O2 = 2-phosphoglycolate + (2R)-3-phosphoglycerate + 2 H(+). Functionally, ruBisCO catalyzes two reactions: the carboxylation of D-ribulose 1,5-bisphosphate, the primary event in carbon dioxide fixation, as well as the oxidative fragmentation of the pentose substrate in the photorespiration process. Both reactions occur simultaneously and in competition at the same active site. The chain is Ribulose bisphosphate carboxylase large chain from Acorus calamus var. americanus (American sweet flag).